A 112-amino-acid chain; its full sequence is uncharacterized protein (112 aa).

2 N-linked (GlcNAc...) asparagine; by host glycosylation sites follow: Asn-29 and Asn-60. Residues 66–86 (IFNGLGFILIVIFIYLLLITL) form a helical membrane-spanning segment.

Belongs to the asfivirus B117L family.

It is found in the host membrane. Its subcellular location is the virion. This is an uncharacterized protein from Ornithodoros (relapsing fever ticks).